Here is a 354-residue protein sequence, read N- to C-terminus: MIKRRKTREITLGTLKIGGNNPIVVQSMTSTKTHDIEATISQIDRLIKAGCEAIRVAVPAKEDAEALKEIVKYSEVPIIADIHFVPYMAFLSMEAGAHGIRINPGNINKKEIVRDIVLEAKKRNICVRLGVNSGSLEKHLLEKYGYPSAEALAESALNWSEFFESLGFYNFKVSIKGSDVIQNALANEIFAEKTDTPLHIGITEAGMGTQGIVKSSVGLGILLYKGIGDTIRVSLTDEPEKEVEVAYEILKSLGLKKKGIDIVSCPTCGRIEVNLPNVVKQVQEALKDKDLSIKVAIMGCAVNAIGEASHADVGLACMKGGALLFKNGKILKKVTEENMVSELLETIEKYYQEV.

Residues C265, C268, C300, and E307 each coordinate [4Fe-4S] cluster.

The protein belongs to the IspG family. [4Fe-4S] cluster serves as cofactor.

It carries out the reaction (2E)-4-hydroxy-3-methylbut-2-enyl diphosphate + oxidized [flavodoxin] + H2O + 2 H(+) = 2-C-methyl-D-erythritol 2,4-cyclic diphosphate + reduced [flavodoxin]. The protein operates within isoprenoid biosynthesis; isopentenyl diphosphate biosynthesis via DXP pathway; isopentenyl diphosphate from 1-deoxy-D-xylulose 5-phosphate: step 5/6. Its function is as follows. Converts 2C-methyl-D-erythritol 2,4-cyclodiphosphate (ME-2,4cPP) into 1-hydroxy-2-methyl-2-(E)-butenyl 4-diphosphate. This is 4-hydroxy-3-methylbut-2-en-1-yl diphosphate synthase (flavodoxin) from Hydrogenobaculum sp. (strain Y04AAS1).